Consider the following 359-residue polypeptide: Methylthioribose-1-phosphate isomerase (359 aa).

Substrate contacts are provided by residues 50–52, Arg-93, and Gln-200; that span reads RGA. The active-site Proton donor is the Asp-241. 251–252 is a binding site for substrate; sequence NK.

This sequence belongs to the eIF-2B alpha/beta/delta subunits family. MtnA subfamily.

The catalysed reaction is 5-(methylsulfanyl)-alpha-D-ribose 1-phosphate = 5-(methylsulfanyl)-D-ribulose 1-phosphate. It participates in amino-acid biosynthesis; L-methionine biosynthesis via salvage pathway; L-methionine from S-methyl-5-thio-alpha-D-ribose 1-phosphate: step 1/6. Its function is as follows. Catalyzes the interconversion of methylthioribose-1-phosphate (MTR-1-P) into methylthioribulose-1-phosphate (MTRu-1-P). The sequence is that of Methylthioribose-1-phosphate isomerase from Symbiobacterium thermophilum (strain DSM 24528 / JCM 14929 / IAM 14863 / T).